The chain runs to 337 residues: MISLKSIVDKLYNLEDLSYQESYQLFDYFIKGQIELPSQTSILTALKLKKETSIEIAAAVEALFDNTKEFPKIKGDLAGIVGTGGDGFNTINISTTAAIVAATAGYKVAKHGGRSVSSKSGSFDLLESFGVNIELAPDQTKQCLELYNLGFLFVPFYSDGFRHIKEARTILKTRTIFNILGPLINPARPNKVVIGVYSKDLILPMAKTLVNLGIDRAVVVYGSGLDEVAIHDDTYVAEIQNNQIIEYKVSPVDFGIDTYAIKDLEGGLPEQNREIIKQILLGKGKEAHNAAVAVNVAMLMKLYDKDDLKQNTQEVLEIIKSGKCFNTLQQVINYSNK.

5-phospho-alpha-D-ribose 1-diphosphate is bound by residues Gly82, 85-86 (GD), Thr90, 92-95 (NIST), 110-118 (KHGGRSVSS), and Ser122. Position 82 (Gly82) interacts with anthranilate. Ser94 contacts Mg(2+). Arg168 contributes to the anthranilate binding site. Residues Asp226 and Glu227 each coordinate Mg(2+).

This sequence belongs to the anthranilate phosphoribosyltransferase family. As to quaternary structure, homodimer. Requires Mg(2+) as cofactor.

It catalyses the reaction N-(5-phospho-beta-D-ribosyl)anthranilate + diphosphate = 5-phospho-alpha-D-ribose 1-diphosphate + anthranilate. It participates in amino-acid biosynthesis; L-tryptophan biosynthesis; L-tryptophan from chorismate: step 2/5. In terms of biological role, catalyzes the transfer of the phosphoribosyl group of 5-phosphorylribose-1-pyrophosphate (PRPP) to anthranilate to yield N-(5'-phosphoribosyl)-anthranilate (PRA). The sequence is that of Anthranilate phosphoribosyltransferase from Francisella tularensis subsp. mediasiatica (strain FSC147).